We begin with the raw amino-acid sequence, 461 residues long: Transcription factor phm6 (461 aa).

The zn(2)-C6 fungal-type DNA-binding region spans 18–50 (CNRCRNHKLKCVVTEAPNGTACCQRCIRAMVPC). Disordered regions lie at residues 55–79 (RERKKRGSSPRVVPQSPWMHSPWET) and 256–278 (LQTDDSSSTQSESSRSRASVGAT). Over residues 256–274 (LQTDDSSSTQSESSRSRAS) the composition is skewed to low complexity.

The protein localises to the nucleus. Transcription factor that regulates the expression of the gene cluster that mediates the biosynthesis of the trans-fused decalin-containing tetramic acid phomasetin. This Pyrenochaetopsis sp protein is Transcription factor phm6.